Consider the following 324-residue polypeptide: Antihemorrhagic factor jMSF (324 aa).

Residues 1 to 19 (MHFLVALVLLGQIIGSTLS) form the signal peptide. Cystatin fetuin-A-type domains lie at 22–130 (VRGD…VKCH) and 141–254 (RNCP…SDCV). The short motif at 23 to 25 (RGD) is the Cell attachment site element. Disulfide bonds link Cys-28/Cys-315, Cys-85/Cys-96, Cys-110/Cys-129, Cys-143/Cys-146, Cys-205/Cys-217, Cys-230/Cys-253, and Cys-287/Cys-291. N-linked (GlcNAc...) asparagine glycosylation occurs at Asn-204. An N-linked (GlcNAc...) asparagine glycan is attached at Asn-282.

As to quaternary structure, homodimer. In terms of tissue distribution, expressed by the liver.

It is found in the secreted. In terms of biological role, suppress hemorrhage induced by metalloproteinases from the same venom (brevilysin-H3, -H4, -H6) and from habu venom (weak inhibition of the metalloproteinases HR2A). The non-hemorrhagic brevilysin-H2 is strongly inhibited by jMSF, whereas the brevilysin-L6 is not inhibited. Does not inhibit serine and cysteine proteases such as trypsin, chymotrypsin, thermolysin, and papain. The inhibition may occur by formation of a non-covalent complex between this protein and the proteinases at their metalloproteinase domains. In Gloydius blomhoffii (Mamushi), this protein is Antihemorrhagic factor jMSF.